The sequence spans 775 residues: DNA polymerase (775 aa).

Belongs to the DNA polymerase type-B family.

It catalyses the reaction DNA(n) + a 2'-deoxyribonucleoside 5'-triphosphate = DNA(n+1) + diphosphate. The chain is DNA polymerase (pol) from Thermococcus sp. (strain 9oN-7).